Reading from the N-terminus, the 143-residue chain is Hemoglobin subunit alpha (143 aa).

The residue at position 1 (Ser1) is an N-acetylserine. A Globin domain is found at 1-143 (SLSATDKARV…LALALSEKYR (143 aa)). O2 is bound at residue His60. His89 provides a ligand contact to heme b.

It belongs to the globin family. As to quaternary structure, heterotetramer of two alpha chains and two beta chains. In terms of tissue distribution, red blood cells.

Its function is as follows. Involved in oxygen transport from gills to the various peripheral tissues. The protein is Hemoglobin subunit alpha (hba) of Leiostomus xanthurus (Spot).